The primary structure comprises 122 residues: Small ribosomal subunit protein uS13 (122 aa).

The disordered stretch occupies residues 97–122; that stretch reads PVRGQRTHTNARTRKGPAKAIAGKKK.

The protein belongs to the universal ribosomal protein uS13 family. As to quaternary structure, part of the 30S ribosomal subunit. Forms a loose heterodimer with protein S19. Forms two bridges to the 50S subunit in the 70S ribosome.

Functionally, located at the top of the head of the 30S subunit, it contacts several helices of the 16S rRNA. In the 70S ribosome it contacts the 23S rRNA (bridge B1a) and protein L5 of the 50S subunit (bridge B1b), connecting the 2 subunits; these bridges are implicated in subunit movement. Contacts the tRNAs in the A and P-sites. This is Small ribosomal subunit protein uS13 from Rhizobium rhizogenes (strain K84 / ATCC BAA-868) (Agrobacterium radiobacter).